The chain runs to 164 residues: RNA pyrophosphohydrolase (164 aa).

Positions 12–158 (RYRQCAGVML…KREVYRAVVK (147 aa)) constitute a Nudix hydrolase domain. The Nudix box motif lies at 47-68 (GGIDPGETQQEAAMRELEEETG).

Belongs to the Nudix hydrolase family. RppH subfamily. A divalent metal cation serves as cofactor.

Its function is as follows. Accelerates the degradation of transcripts by removing pyrophosphate from the 5'-end of triphosphorylated RNA, leading to a more labile monophosphorylated state that can stimulate subsequent ribonuclease cleavage. This Erythrobacter litoralis (strain HTCC2594) protein is RNA pyrophosphohydrolase.